A 493-amino-acid chain; its full sequence is tRNA(Ile)-lysidine synthase (493 aa).

26-31 (SGGSDS) contacts ATP.

This sequence belongs to the tRNA(Ile)-lysidine synthase family.

Its subcellular location is the cytoplasm. It catalyses the reaction cytidine(34) in tRNA(Ile2) + L-lysine + ATP = lysidine(34) in tRNA(Ile2) + AMP + diphosphate + H(+). In terms of biological role, ligates lysine onto the cytidine present at position 34 of the AUA codon-specific tRNA(Ile) that contains the anticodon CAU, in an ATP-dependent manner. Cytidine is converted to lysidine, thus changing the amino acid specificity of the tRNA from methionine to isoleucine. The polypeptide is tRNA(Ile)-lysidine synthase (Bartonella henselae (strain ATCC 49882 / DSM 28221 / CCUG 30454 / Houston 1) (Rochalimaea henselae)).